We begin with the raw amino-acid sequence, 319 residues long: Acetyl-coenzyme A carboxylase carboxyl transferase subunit alpha (319 aa).

The CoA carboxyltransferase C-terminal domain maps to Asn-35–Asp-296.

Belongs to the AccA family. As to quaternary structure, acetyl-CoA carboxylase is a heterohexamer composed of biotin carboxyl carrier protein (AccB), biotin carboxylase (AccC) and two subunits each of ACCase subunit alpha (AccA) and ACCase subunit beta (AccD).

Its subcellular location is the cytoplasm. The catalysed reaction is N(6)-carboxybiotinyl-L-lysyl-[protein] + acetyl-CoA = N(6)-biotinyl-L-lysyl-[protein] + malonyl-CoA. It functions in the pathway lipid metabolism; malonyl-CoA biosynthesis; malonyl-CoA from acetyl-CoA: step 1/1. Its function is as follows. Component of the acetyl coenzyme A carboxylase (ACC) complex. First, biotin carboxylase catalyzes the carboxylation of biotin on its carrier protein (BCCP) and then the CO(2) group is transferred by the carboxyltransferase to acetyl-CoA to form malonyl-CoA. The protein is Acetyl-coenzyme A carboxylase carboxyl transferase subunit alpha of Cronobacter sakazakii (strain ATCC BAA-894) (Enterobacter sakazakii).